The following is a 425-amino-acid chain: Putative E3 ubiquitin-protein ligase UBR7 (425 aa).

The segment at 44 to 116 (EKCSYSQGSV…KNLECKLFPD (73 aa)) adopts a UBR-type zinc-finger fold. The PHD-type; atypical zinc finger occupies 132–188 (GLYCVCKRPYPDPEDEVPDEMIQCVVCEDWFHGRHLGAIPPESGDFQEMVCQACMRR). The interval 212 to 269 (LPNATGMGDEDVSKPENGAPQDNGLKEDAPEHGRDSVNEVKAEQKNEPCSSSSSESDL) is disordered. Residues lysine 225 and lysine 252 each participate in a glycyl lysine isopeptide (Lys-Gly) (interchain with G-Cter in SUMO2) cross-link. Basic and acidic residues predominate over residues 235–257 (GLKEDAPEHGRDSVNEVKAEQKN). Phosphoserine is present on serine 264. Residues lysine 274 and lysine 398 each participate in a glycyl lysine isopeptide (Lys-Gly) (interchain with G-Cter in SUMO2) cross-link.

In terms of tissue distribution, expressed in testis and sperm (at protein level).

The catalysed reaction is S-ubiquitinyl-[E2 ubiquitin-conjugating enzyme]-L-cysteine + [acceptor protein]-L-lysine = [E2 ubiquitin-conjugating enzyme]-L-cysteine + N(6)-ubiquitinyl-[acceptor protein]-L-lysine.. Its pathway is protein modification; protein ubiquitination. In terms of biological role, E3 ubiquitin-protein ligase which is a component of the N-end rule pathway. Recognizes and binds to proteins bearing specific N-terminal residues that are destabilizing according to the N-end rule, leading to their ubiquitination and subsequent degradation. This Mus musculus (Mouse) protein is Putative E3 ubiquitin-protein ligase UBR7 (Ubr7).